The sequence spans 49 residues: Large ribosomal subunit protein bL33B (49 aa).

This sequence belongs to the bacterial ribosomal protein bL33 family.

The protein is Large ribosomal subunit protein bL33B of Exiguobacterium sibiricum (strain DSM 17290 / CCUG 55495 / CIP 109462 / JCM 13490 / 255-15).